The chain runs to 206 residues: Urease accessory protein UreG (206 aa).

Position 14–21 (14–21 (GPVGSGKT)) interacts with GTP.

It belongs to the SIMIBI class G3E GTPase family. UreG subfamily. Homodimer. UreD, UreF and UreG form a complex that acts as a GTP-hydrolysis-dependent molecular chaperone, activating the urease apoprotein by helping to assemble the nickel containing metallocenter of UreC. The UreE protein probably delivers the nickel.

It localises to the cytoplasm. Its function is as follows. Facilitates the functional incorporation of the urease nickel metallocenter. This process requires GTP hydrolysis, probably effectuated by UreG. This Methylocella silvestris (strain DSM 15510 / CIP 108128 / LMG 27833 / NCIMB 13906 / BL2) protein is Urease accessory protein UreG.